We begin with the raw amino-acid sequence, 266 residues long: Urease accessory protein UreD (266 aa).

The protein belongs to the UreD family. UreD, UreF and UreG form a complex that acts as a GTP-hydrolysis-dependent molecular chaperone, activating the urease apoprotein by helping to assemble the nickel containing metallocenter of UreC. The UreE protein probably delivers the nickel.

It is found in the cytoplasm. Functionally, required for maturation of urease via the functional incorporation of the urease nickel metallocenter. The sequence is that of Urease accessory protein UreD from Jannaschia sp. (strain CCS1).